Reading from the N-terminus, the 367-residue chain is Queuine tRNA-ribosyltransferase (367 aa).

Catalysis depends on D89, which acts as the Proton acceptor. Substrate contacts are provided by residues 89-93 (DSGGF), D143, Q185, and G212. The RNA binding stretch occupies residues 243-249 (GVGTPSD). The active-site Nucleophile is the D262. Positions 267 to 271 (TRNAR) are RNA binding; important for wobble base 34 recognition. C300, C302, C305, and H331 together coordinate Zn(2+).

This sequence belongs to the queuine tRNA-ribosyltransferase family. Homodimer. Within each dimer, one monomer is responsible for RNA recognition and catalysis, while the other monomer binds to the replacement base PreQ1. It depends on Zn(2+) as a cofactor.

It catalyses the reaction 7-aminomethyl-7-carbaguanine + guanosine(34) in tRNA = 7-aminomethyl-7-carbaguanosine(34) in tRNA + guanine. The protein operates within tRNA modification; tRNA-queuosine biosynthesis. In terms of biological role, catalyzes the base-exchange of a guanine (G) residue with the queuine precursor 7-aminomethyl-7-deazaguanine (PreQ1) at position 34 (anticodon wobble position) in tRNAs with GU(N) anticodons (tRNA-Asp, -Asn, -His and -Tyr). Catalysis occurs through a double-displacement mechanism. The nucleophile active site attacks the C1' of nucleotide 34 to detach the guanine base from the RNA, forming a covalent enzyme-RNA intermediate. The proton acceptor active site deprotonates the incoming PreQ1, allowing a nucleophilic attack on the C1' of the ribose to form the product. After dissociation, two additional enzymatic reactions on the tRNA convert PreQ1 to queuine (Q), resulting in the hypermodified nucleoside queuosine (7-(((4,5-cis-dihydroxy-2-cyclopenten-1-yl)amino)methyl)-7-deazaguanosine). The protein is Queuine tRNA-ribosyltransferase of Thiobacillus denitrificans (strain ATCC 25259 / T1).